We begin with the raw amino-acid sequence, 349 residues long: Phenylalanine--tRNA ligase alpha subunit (349 aa).

Residue E258 participates in Mg(2+) binding.

The protein belongs to the class-II aminoacyl-tRNA synthetase family. Phe-tRNA synthetase alpha subunit type 1 subfamily. As to quaternary structure, tetramer of two alpha and two beta subunits. Requires Mg(2+) as cofactor.

It localises to the cytoplasm. It carries out the reaction tRNA(Phe) + L-phenylalanine + ATP = L-phenylalanyl-tRNA(Phe) + AMP + diphosphate + H(+). The polypeptide is Phenylalanine--tRNA ligase alpha subunit (Rickettsia rickettsii (strain Sheila Smith)).